Here is a 632-residue protein sequence, read N- to C-terminus: Probable potassium transport system protein Kup (632 aa).

12 helical membrane passes run leucine 20–leucine 40, isoleucine 60–isoleucine 80, leucine 111–proline 131, phenylalanine 146–leucine 166, leucine 178–isoleucine 198, phenylalanine 216–threonine 236, tryptophan 257–leucine 277, leucine 289–isoleucine 309, isoleucine 347–phenylalanine 367, valine 379–leucine 399, proline 404–alanine 424, and isoleucine 429–threonine 449.

The protein belongs to the HAK/KUP transporter (TC 2.A.72) family.

It is found in the cell inner membrane. It carries out the reaction K(+)(in) + H(+)(in) = K(+)(out) + H(+)(out). In terms of biological role, transport of potassium into the cell. Likely operates as a K(+):H(+) symporter. The protein is Probable potassium transport system protein Kup of Pseudomonas putida (strain W619).